The following is a 251-amino-acid chain: SPbeta prophage-derived putative antirepressor protein YoqD (251 aa).

The protein is SPbeta prophage-derived putative antirepressor protein YoqD (yoqD) of Bacillus subtilis (strain 168).